The sequence spans 206 residues: Pyridoxal 5'-phosphate synthase subunit PdxT (206 aa).

Residue G59–S61 coordinates L-glutamine. The Nucleophile role is filled by C91. L-glutamine is bound by residues R123 and I151–R152. Residues H187 and E189 each act as charge relay system in the active site.

This sequence belongs to the glutaminase PdxT/SNO family. As to quaternary structure, in the presence of PdxS, forms a dodecamer of heterodimers. Only shows activity in the heterodimer.

The catalysed reaction is aldehydo-D-ribose 5-phosphate + D-glyceraldehyde 3-phosphate + L-glutamine = pyridoxal 5'-phosphate + L-glutamate + phosphate + 3 H2O + H(+). It catalyses the reaction L-glutamine + H2O = L-glutamate + NH4(+). It functions in the pathway cofactor biosynthesis; pyridoxal 5'-phosphate biosynthesis. Its function is as follows. Catalyzes the hydrolysis of glutamine to glutamate and ammonia as part of the biosynthesis of pyridoxal 5'-phosphate. The resulting ammonia molecule is channeled to the active site of PdxS. This is Pyridoxal 5'-phosphate synthase subunit PdxT from Mycobacterium sp. (strain KMS).